A 161-amino-acid chain; its full sequence is MNARRKKRLTLAVALIGGVAAIASLLLYALNSNLNLFYTPTEIVQGKKDTGVLPEVGQRIRVGGMVTIGSMVRDPDSLHVEFAVHDAAGGEILVTYDDLLPDLFREGQGIVAQGVLIEGGKLQATEVLAKHDENYMPPEVAEAMGQTHEKLDYNEQQKTSY.

At 1–8 (MNARRKKR) the chain is on the cytoplasmic side. A helical; Signal-anchor for type II membrane protein membrane pass occupies residues 9–29 (LTLAVALIGGVAAIASLLLYA). The Periplasmic portion of the chain corresponds to 30 to 161 (LNSNLNLFYT…DYNEQQKTSY (132 aa)). Heme is bound by residues His131 and Tyr135.

Belongs to the CcmE/CycJ family.

It localises to the cell inner membrane. Heme chaperone required for the biogenesis of c-type cytochromes. Transiently binds heme delivered by CcmC and transfers the heme to apo-cytochromes in a process facilitated by CcmF and CcmH. The sequence is that of Cytochrome c-type biogenesis protein CcmE from Shewanella sediminis (strain HAW-EB3).